Reading from the N-terminus, the 400-residue chain is Phosphoglycerate kinase (400 aa).

Substrate is bound by residues 22-24, Arg-38, 61-64, Arg-120, and Arg-153; these read DFN and HLGR. ATP contacts are provided by residues Lys-206, Gly-297, Glu-328, and 354–357; that span reads GGDT.

Belongs to the phosphoglycerate kinase family. As to quaternary structure, monomer.

The protein localises to the cytoplasm. It carries out the reaction (2R)-3-phosphoglycerate + ATP = (2R)-3-phospho-glyceroyl phosphate + ADP. The protein operates within carbohydrate degradation; glycolysis; pyruvate from D-glyceraldehyde 3-phosphate: step 2/5. The chain is Phosphoglycerate kinase from Campylobacter curvus (strain 525.92).